Consider the following 262-residue polypeptide: Hydroxyethylthiazole kinase (262 aa).

Met43 contacts substrate. The ATP site is built by Arg118 and Thr164. Position 191 (Ala191) interacts with substrate.

Belongs to the Thz kinase family. The cofactor is Mg(2+).

It catalyses the reaction 5-(2-hydroxyethyl)-4-methylthiazole + ATP = 4-methyl-5-(2-phosphooxyethyl)-thiazole + ADP + H(+). It functions in the pathway cofactor biosynthesis; thiamine diphosphate biosynthesis; 4-methyl-5-(2-phosphoethyl)-thiazole from 5-(2-hydroxyethyl)-4-methylthiazole: step 1/1. Catalyzes the phosphorylation of the hydroxyl group of 4-methyl-5-beta-hydroxyethylthiazole (THZ). The polypeptide is Hydroxyethylthiazole kinase (Cereibacter sphaeroides (strain ATCC 17029 / ATH 2.4.9) (Rhodobacter sphaeroides)).